Here is a 154-residue protein sequence, read N- to C-terminus: uncharacterized protein (154 aa).

The N-terminal 42 residues, 1 to 42 (MLRVIWKHSSRVTRSIELSNISTTNHTRSLRRLSWISPRRFY), are a transit peptide targeting the mitochondrion.

It is found in the mitochondrion. This is an uncharacterized protein from Saccharomyces cerevisiae (strain ATCC 204508 / S288c) (Baker's yeast).